Consider the following 284-residue polypeptide: MKQKVVSIGDIQVANDLPFVLFGGMNVLESRDLAMRICEHYVTVTQKLGIPYVFKASFDKANRSSIHSYRGPGLEEGMKIFQELKRTFGVKIITDVHTPEQAQPVADVVDIIQLPAFLARQTDLVEAMAKTGAVINVKKPQFLSPGQMGNIVDKFREGGNDRVILCDRGSNFGYDNLVVDMLGFGVMKSVSHGAPVIFDVTHSLQCRDPFGAASGGRRAQVTELARSGMAIGLAGLFIEAHPDPVHAMCDGPSALPLEKLEPFLVQMKAIDDLVKNFPPLDTAN.

This sequence belongs to the KdsA family.

The protein localises to the cytoplasm. It catalyses the reaction D-arabinose 5-phosphate + phosphoenolpyruvate + H2O = 3-deoxy-alpha-D-manno-2-octulosonate-8-phosphate + phosphate. It functions in the pathway carbohydrate biosynthesis; 3-deoxy-D-manno-octulosonate biosynthesis; 3-deoxy-D-manno-octulosonate from D-ribulose 5-phosphate: step 2/3. It participates in bacterial outer membrane biogenesis; lipopolysaccharide biosynthesis. This Edwardsiella ictaluri (strain 93-146) protein is 2-dehydro-3-deoxyphosphooctonate aldolase.